The following is a 121-amino-acid chain: Large ribosomal subunit protein bL17 (121 aa).

Belongs to the bacterial ribosomal protein bL17 family. As to quaternary structure, part of the 50S ribosomal subunit. Contacts protein L32.

The protein is Large ribosomal subunit protein bL17 of Metamycoplasma arthritidis (strain 158L3-1) (Mycoplasma arthritidis).